The chain runs to 330 residues: Laforin (330 aa).

In terms of domain architecture, CBM20 spans 1–123; the sequence is MLFRFGVVVP…DNLVDGVYCL (123 aa). S25 is modified (phosphoserine; by AMPK). Substrate contacts are provided by residues W32, K86, 102-106, D196, D234, and R240; that span reads GPHHD. Residues 155-322 enclose the Tyrosine-protein phosphatase domain; it reads HYSRILPNIW…QQDFSQKFGK (168 aa). The active-site Phosphocysteine intermediate is C265. Residues 265–271 carry the Glucan phosphatase signature motif CXAGXGR motif; that stretch reads CNAGVGR. Residues 266–271 and Y303 each bind substrate; that span reads NAGVGR.

It belongs to the protein-tyrosine phosphatase family. As to quaternary structure, homodimer. Interacts with PPP1R3B, PPP1R3C, HIRIP5, and EPM2AIP1. Binds glycogen and Lafora bodies. Interacts with NHLRC1/malin (via the NHL repeats). Forms a complex with NHLRC1/malin and HSP70. Interacts with PPP1R3D; in the presence of NHLC1/malin the interaction leads to ubiquitination and autophagic degradation of PPP1R3D. Interacts (via the phosphatase domain) with MAPT/Tau; the interaction dephosphorylates MAPT. Interacts with PRDM8. Post-translationally, polyubiquitinated by NHLRC1/malin. In terms of processing, phosphorylation on Ser-25 by AMPK affects the phosphatase activity of the enzyme and its ability to homodimerize and interact with NHLRC1, PPP1R3C or PRKAA2. Detected in skeletal muscle and in brain (at protein level). Widely expressed. Higher levels of expression are found in heart, brain, liver, skeletal muscle and kidney.

Its subcellular location is the cytoplasm. The protein resides in the endoplasmic reticulum membrane. It is found in the cell membrane. The enzyme catalyses O-phospho-L-tyrosyl-[protein] + H2O = L-tyrosyl-[protein] + phosphate. It catalyses the reaction O-phospho-L-seryl-[protein] + H2O = L-seryl-[protein] + phosphate. The catalysed reaction is O-phospho-L-threonyl-[protein] + H2O = L-threonyl-[protein] + phosphate. In terms of biological role, plays an important role in preventing glycogen hyperphosphorylation and the formation of insoluble aggregates, via its activity as glycogen phosphatase, and by promoting the ubiquitination of proteins involved in glycogen metabolism via its interaction with the E3 ubiquitin ligase NHLRC1/malin. Dephosphorylates phosphotyrosine and synthetic substrates, such as para-nitrophenylphosphate (pNPP), and has low activity with phosphoserine and phosphothreonine substrates (in vitro). Has also been shown to dephosphorylate MAPT. Shows strong phosphatase activity towards complex carbohydrates in vitro, avoiding glycogen hyperphosphorylation which is associated with reduced branching and formation of insoluble aggregates. Forms a complex with NHLRC1/malin and HSP70, which suppresses the cellular toxicity of misfolded proteins by promoting their degradation through the ubiquitin-proteasome system (UPS). Acts as a scaffold protein to facilitate PPP1R3C/PTG ubiquitination by NHLRC1/malin. Also promotes proteasome-independent protein degradation through the macroautophagy pathway. The protein is Laforin (Epm2a) of Mus musculus (Mouse).